The primary structure comprises 326 residues: Acetyl-coenzyme A carboxylase carboxyl transferase subunit alpha (326 aa).

One can recognise a CoA carboxyltransferase C-terminal domain in the interval 44–298 (KLETRAMQLR…KQALLDNLDE (255 aa)).

This sequence belongs to the AccA family. Acetyl-CoA carboxylase is a heterohexamer composed of biotin carboxyl carrier protein (AccB), biotin carboxylase (AccC) and two subunits each of ACCase subunit alpha (AccA) and ACCase subunit beta (AccD).

The protein localises to the cytoplasm. It catalyses the reaction N(6)-carboxybiotinyl-L-lysyl-[protein] + acetyl-CoA = N(6)-biotinyl-L-lysyl-[protein] + malonyl-CoA. It functions in the pathway lipid metabolism; malonyl-CoA biosynthesis; malonyl-CoA from acetyl-CoA: step 1/1. In terms of biological role, component of the acetyl coenzyme A carboxylase (ACC) complex. First, biotin carboxylase catalyzes the carboxylation of biotin on its carrier protein (BCCP) and then the CO(2) group is transferred by the carboxyltransferase to acetyl-CoA to form malonyl-CoA. The polypeptide is Acetyl-coenzyme A carboxylase carboxyl transferase subunit alpha (Trichormus variabilis (strain ATCC 29413 / PCC 7937) (Anabaena variabilis)).